A 94-amino-acid polypeptide reads, in one-letter code: MAFGTEPIPTGLADPPIDDLMEHADSKYALAIFAAKRARQINSYFTQLNEGLLQNVGPLVEYKSQEKPLSIAFREINEGLLEETLGEDDLSEGN.

This sequence belongs to the RNA polymerase subunit omega family. In terms of assembly, the RNAP catalytic core consists of 2 alpha, 1 beta, 1 beta' and 1 omega subunit. When a sigma factor is associated with the core the holoenzyme is formed, which can initiate transcription.

The catalysed reaction is RNA(n) + a ribonucleoside 5'-triphosphate = RNA(n+1) + diphosphate. Functionally, promotes RNA polymerase assembly. Latches the N- and C-terminal regions of the beta' subunit thereby facilitating its interaction with the beta and alpha subunits. The protein is DNA-directed RNA polymerase subunit omega of Bifidobacterium animalis subsp. lactis (strain AD011).